Here is a 690-residue protein sequence, read N- to C-terminus: Protease 2 (690 aa).

Active-site charge relay system residues include Ser534, Asp619, and His654.

Belongs to the peptidase S9A family.

It catalyses the reaction Hydrolysis of -Arg-|-Xaa- and -Lys-|-Xaa- bonds in oligopeptides, even when P1' residue is proline.. In terms of biological role, cleaves peptide bonds on the C-terminal side of lysyl and argininyl residues. In Moraxella lacunata, this protein is Protease 2 (ptrB).